Reading from the N-terminus, the 485-residue chain is Otoconin-90 (485 aa).

The N-terminal stretch at 1 to 17 (MIMLLMVGMLMAPCVGA) is a signal peptide. A glycan (N-linked (GlcNAc...) asparagine) is linked at asparagine 37. Positions 75-189 (LLQFVNSMRC…SLNFLDASFC (115 aa)) are phospholipase A2-like 1. Cystine bridges form between cysteine 84–cysteine 144, cysteine 98–cysteine 189, cysteine 100–cysteine 116, cysteine 115–cysteine 171, cysteine 122–cysteine 164, cysteine 131–cysteine 157, and cysteine 151–cysteine 162. N-linked (GlcNAc...) asparagine glycans are attached at residues asparagine 178 and asparagine 288. Phospholipase A2-like stretches follow at residues 315–371 (MLQL…QVGC) and 383–435 (CEDH…PVSC). A glycan (N-linked (GlcNAc...) asparagine) is linked at asparagine 417. The interval 444 to 485 (LASSVDSSSEENSEEAPPQMERLRRFLEKPPGPLGARPLGGK) is disordered.

Belongs to the phospholipase A2 family. As to quaternary structure, interacts with OTOL1. As to expression, in the embryo, highly expressed in the developing otocyst with weak expression in the brain. Also expressed in nonsensory epithelia of both the vestibular and cochlear portions of the developing inner ear. Not expressed in adult or embryonic macular sensory epithelia.

The protein resides in the secreted. In terms of biological role, major protein of the otoconia, a calcium carbonate structure in the saccule and utricle of the ear. Together with OTOL1, acts as a scaffold for otoconia biomineralization: sequesters calcium and forms interconnecting fibrils between otoconia that are incorporated into the calcium crystal structure. Together with OTOL1, modulates calcite crystal morphology and growth kinetics. It is unlikely that this protein has phospholipase A2 activity. In Mus musculus (Mouse), this protein is Otoconin-90.